The following is a 441-amino-acid chain: Asparagine--tRNA ligase, mitochondrial (441 aa).

It belongs to the class-II aminoacyl-tRNA synthetase family.

Its subcellular location is the mitochondrion. The catalysed reaction is tRNA(Asn) + L-asparagine + ATP = L-asparaginyl-tRNA(Asn) + AMP + diphosphate + H(+). This is Asparagine--tRNA ligase, mitochondrial (slm5) from Schizosaccharomyces pombe (strain 972 / ATCC 24843) (Fission yeast).